Reading from the N-terminus, the 279-residue chain is Proteasome subunit alpha type-1 (279 aa).

Tyrosine 103 carries the post-translational modification Phosphotyrosine. Basic and acidic residues predominate over residues 235-249 (HVAIAKENDNDTPRN). The segment at 235–279 (HVAIAKENDNDTPRNDDDDDRPSPPEEPAAGPRDPEVLVATEQRP) is disordered.

It belongs to the peptidase T1A family. As to quaternary structure, the 26S proteasome consists of a 20S proteasome core and two 19S regulatory subunits. The 20S proteasome core is composed of 28 subunits that are arranged in four stacked rings, resulting in a barrel-shaped structure. The two end rings are each formed by seven alpha subunits, and the two central rings are each formed by seven beta subunits. The catalytic chamber with the active sites is on the inside of the barrel. Interacts with PI31.

The protein resides in the cytoplasm. Its subcellular location is the nucleus. In terms of biological role, the proteasome is a multicatalytic proteinase complex which is characterized by its ability to cleave peptides with Arg, Phe, Tyr, Leu, and Glu adjacent to the leaving group at neutral or slightly basic pH. The proteasome has an ATP-dependent proteolytic activity. This is Proteasome subunit alpha type-1 (Prosalpha6) from Drosophila melanogaster (Fruit fly).